The following is a 205-amino-acid chain: Gap junction epsilon-1 protein (205 aa).

At 1-23 (MSLNYIKNFYEGCVKPPTVIGQF) the chain is on the cytoplasmic side. The helical transmembrane segment at 24–44 (HTLFFGSIRIFFLGVLGFAVY) threads the bilayer. Residues 45 to 76 (GNEALHFICDPDKREVNLFCYNQFRPITPQVS) are Extracellular-facing. 2 disulfide bridges follow: C53/C161 and C64/C148. The chain crosses the membrane as a helical span at residues 77-97 (FSALQLVIVLVPGALFHLYAA). Residues 98–112 (CKSINQECILQKPIY) are Cytoplasmic-facing. The helical transmembrane segment at 113–133 (TIIYILSVLLRISLAAIAFWL) threads the bilayer. The Extracellular portion of the chain corresponds to 134 to 170 (QIYLFGFQVKSLYLCDARSLGENMIIRCMVPEHFEKT). A helical transmembrane segment spans residues 171–191 (IFLIAINTFTTITILLFVAEI). The Cytoplasmic segment spans residues 192–205 (FEIIFRRLYFPFRQ).

It belongs to the connexin family. Beta-type (group I) subfamily. A connexon is composed of a hexamer of connexins. As to expression, not detected in lens or retina.

The protein resides in the cell membrane. Functionally, mediates calcium-independent ATP release, suggesting activity as a hemichannel. Does not form functional gap junctions. The chain is Gap junction epsilon-1 protein (GJE1) from Homo sapiens (Human).